Consider the following 380-residue polypeptide: Anhydro-N-acetylmuramic acid kinase (380 aa).

Position 17–24 (G17–D24) interacts with ATP.

It belongs to the anhydro-N-acetylmuramic acid kinase family.

It catalyses the reaction 1,6-anhydro-N-acetyl-beta-muramate + ATP + H2O = N-acetyl-D-muramate 6-phosphate + ADP + H(+). It functions in the pathway amino-sugar metabolism; 1,6-anhydro-N-acetylmuramate degradation. The protein operates within cell wall biogenesis; peptidoglycan recycling. Catalyzes the specific phosphorylation of 1,6-anhydro-N-acetylmuramic acid (anhMurNAc) with the simultaneous cleavage of the 1,6-anhydro ring, generating MurNAc-6-P. Is required for the utilization of anhMurNAc either imported from the medium or derived from its own cell wall murein, and thus plays a role in cell wall recycling. The sequence is that of Anhydro-N-acetylmuramic acid kinase from Cupriavidus metallidurans (strain ATCC 43123 / DSM 2839 / NBRC 102507 / CH34) (Ralstonia metallidurans).